The primary structure comprises 134 residues: Small ribosomal subunit protein bS6 (134 aa).

Residues 103 to 134 (AAPVKSAEEGTEEVAAEAATEAPAETTTTVEG) are disordered. Residues 118–134 (AEAATEAPAETTTTVEG) are compositionally biased toward low complexity.

Belongs to the bacterial ribosomal protein bS6 family.

Its function is as follows. Binds together with bS18 to 16S ribosomal RNA. In Citrifermentans bemidjiense (strain ATCC BAA-1014 / DSM 16622 / JCM 12645 / Bem) (Geobacter bemidjiensis), this protein is Small ribosomal subunit protein bS6.